The chain runs to 307 residues: Ribonuclease HII (307 aa).

The 192-residue stretch at 44–235 folds into the RNase H type-2 domain; it reads EPVAGVDEAG…VRRAGGRMEL (192 aa). A divalent metal cation is bound by residues Asp-50, Glu-51, and Asp-144. The disordered stretch occupies residues 241–307; sequence ADSDDSPGFA…SRPAELLEIP (67 aa). The span at 250–280 shows a compositional bias: low complexity; that stretch reads ASGPAEAVPGPAGSAGAASAAARPAAAGPAG. A compositionally biased stretch (basic and acidic residues) spans 287–296; the sequence is RAADLRDNGD.

Belongs to the RNase HII family. Mn(2+) is required as a cofactor. Mg(2+) serves as cofactor.

It is found in the cytoplasm. The enzyme catalyses Endonucleolytic cleavage to 5'-phosphomonoester.. Endonuclease that specifically degrades the RNA of RNA-DNA hybrids. This is Ribonuclease HII from Acidothermus cellulolyticus (strain ATCC 43068 / DSM 8971 / 11B).